The sequence spans 336 residues: DNA-directed RNA polymerase subunit alpha (336 aa).

Positions 1–232 (MIQKNWQELI…DQLSVFVNFD (232 aa)) are alpha N-terminal domain (alpha-NTD). An alpha C-terminal domain (alpha-CTD) region spans residues 248–336 (FNPALLKKVD…DLAKRYEDQY (89 aa)).

This sequence belongs to the RNA polymerase alpha chain family. Homodimer. The RNAP catalytic core consists of 2 alpha, 1 beta, 1 beta' and 1 omega subunit. When a sigma factor is associated with the core the holoenzyme is formed, which can initiate transcription.

The catalysed reaction is RNA(n) + a ribonucleoside 5'-triphosphate = RNA(n+1) + diphosphate. Its function is as follows. DNA-dependent RNA polymerase catalyzes the transcription of DNA into RNA using the four ribonucleoside triphosphates as substrates. The polypeptide is DNA-directed RNA polymerase subunit alpha (Sinorhizobium medicae (strain WSM419) (Ensifer medicae)).